Consider the following 474-residue polypeptide: tRNA-2-methylthio-N(6)-dimethylallyladenosine synthase (474 aa).

An MTTase N-terminal domain is found at 3–120 (KKLHIKTWGC…LPEMINAVRG (118 aa)). [4Fe-4S] cluster-binding residues include cysteine 12, cysteine 49, cysteine 83, cysteine 157, cysteine 161, and cysteine 164. Positions 143-375 (RADGPTAFVS…QERINQQAMA (233 aa)) constitute a Radical SAM core domain. One can recognise a TRAM domain in the interval 378 to 441 (RRMLGTVQRI…TNSLRGKIVR (64 aa)).

This sequence belongs to the methylthiotransferase family. MiaB subfamily. Monomer. [4Fe-4S] cluster serves as cofactor.

It localises to the cytoplasm. The enzyme catalyses N(6)-dimethylallyladenosine(37) in tRNA + (sulfur carrier)-SH + AH2 + 2 S-adenosyl-L-methionine = 2-methylsulfanyl-N(6)-dimethylallyladenosine(37) in tRNA + (sulfur carrier)-H + 5'-deoxyadenosine + L-methionine + A + S-adenosyl-L-homocysteine + 2 H(+). Catalyzes the methylthiolation of N6-(dimethylallyl)adenosine (i(6)A), leading to the formation of 2-methylthio-N6-(dimethylallyl)adenosine (ms(2)i(6)A) at position 37 in tRNAs that read codons beginning with uridine. This is tRNA-2-methylthio-N(6)-dimethylallyladenosine synthase from Klebsiella pneumoniae (strain 342).